The sequence spans 184 residues: MNLQVDHIRVDFIIGSRRISNFCWAFILLFGALGFFFVGFSSYLQKDLIPFLSAEQILFIPQGIVMCFYGIAGLFISFYLWCTICWNVGSGYNKFDKQKGIFSIFRWGFPGKNRRIFIQFLIKDIQSIRMEVQEGFLSRRVLYIKIKGQPDIPLSRIEEYFTLREMEDKAAELARFLKVSIEGI.

2 consecutive transmembrane segments (helical) span residues 21–43 (NFCW…FSSY) and 58–80 (LFIP…SFYL).

Belongs to the Ycf4 family.

The protein resides in the plastid. The protein localises to the chloroplast thylakoid membrane. Functionally, seems to be required for the assembly of the photosystem I complex. This chain is Photosystem I assembly protein Ycf4, found in Marchantia polymorpha (Common liverwort).